A 95-amino-acid chain; its full sequence is Small ribosomal subunit protein uS19 (95 aa).

Belongs to the universal ribosomal protein uS19 family.

Protein S19 forms a complex with S13 that binds strongly to the 16S ribosomal RNA. The protein is Small ribosomal subunit protein uS19 of Myxococcus xanthus (strain DK1622).